The following is a 353-amino-acid chain: Rhodopsin (353 aa).

Residues 1 to 36 (MNGTEGDNFYVPFSNKTGLARSPYEYPQYYLAEPWK) are Extracellular-facing. N-linked (GlcNAc...) asparagine glycans are attached at residues Asn-2 and Asn-15. The helical transmembrane segment at 37-61 (YSALAAYMFFLILVGFPVNFLTLFV) threads the bilayer. The Cytoplasmic portion of the chain corresponds to 62–73 (TVQHKKLRTPLN). Residues 74–96 (YILLNLAMANLFMVLFGFTVTMY) traverse the membrane as a helical segment. Topologically, residues 97–110 (TSMNGYFVFGPTMC) are extracellular. Residues Cys-110 and Cys-187 are joined by a disulfide bond. A helical membrane pass occupies residues 111 to 133 (SIEGFFATLGGEVALWSLVVLAI). The 'Ionic lock' involved in activated form stabilization motif lies at 134–136 (ERY). Over 134-152 (ERYIVICKPMGNFRFGNTH) the chain is Cytoplasmic. Residues 153-173 (AIMGVAFTWIMALACAAPPLV) traverse the membrane as a helical segment. Residues 174 to 202 (GWSRYIPEGMQCSCGPDYYTLNPNFNNES) lie on the Extracellular side of the membrane. A helical membrane pass occupies residues 203 to 224 (YVVYMFVVHFLVPFVIIFFCYG). The Cytoplasmic segment spans residues 225-252 (RLLCTVKEAAAAQQESASTQKAEKEVTR). The chain crosses the membrane as a helical span at residues 253-274 (MVVLMVIGFLVCWVPYASVAFY). The Extracellular portion of the chain corresponds to 275–286 (IFTHQGSDFGAT). Residues 287-308 (FMTLPAFFAKSSALYNPVIYIL) traverse the membrane as a helical segment. Lys-296 carries the post-translational modification N6-(retinylidene)lysine. Over 309–353 (MNKQFRNCMITTLCCGKNPLGDDESGASTSKTEVSSVSTSPVSPA) the chain is Cytoplasmic. The disordered stretch occupies residues 330–353 (DDESGASTSKTEVSSVSTSPVSPA). The segment covering 336–353 (STSKTEVSSVSTSPVSPA) has biased composition (low complexity).

It belongs to the G-protein coupled receptor 1 family. Opsin subfamily. Phosphorylated on some or all of the serine and threonine residues present in the C-terminal region. Post-translationally, contains one covalently linked retinal chromophore. Short photoreceptor cells.

The protein localises to the membrane. The protein resides in the cell projection. It is found in the cilium. It localises to the photoreceptor outer segment. Functionally, photoreceptor required for image-forming vision at low light intensity. While most salt water fish species use retinal as chromophore, most freshwater fish use 3-dehydroretinal, or a mixture of retinal and 3-dehydroretinal. Light-induced isomerization of 11-cis to all-trans retinal triggers a conformational change that activates signaling via G-proteins. Subsequent receptor phosphorylation mediates displacement of the bound G-protein alpha subunit by arrestin and terminates signaling. The sequence is that of Rhodopsin (RHO) from Lethenteron camtschaticum (Japanese lamprey).